The following is a 412-amino-acid chain: Glucose-1-phosphate adenylyltransferase (412 aa).

Alpha-D-glucose 1-phosphate-binding positions include G163, 179–180 (EK), and S197.

It belongs to the bacterial/plant glucose-1-phosphate adenylyltransferase family. As to quaternary structure, homotetramer.

The enzyme catalyses alpha-D-glucose 1-phosphate + ATP + H(+) = ADP-alpha-D-glucose + diphosphate. Its pathway is glycan biosynthesis; glycogen biosynthesis. In terms of biological role, involved in the biosynthesis of ADP-glucose, a building block required for the elongation reactions to produce glycogen. Catalyzes the reaction between ATP and alpha-D-glucose 1-phosphate (G1P) to produce pyrophosphate and ADP-Glc. This Frankia casuarinae (strain DSM 45818 / CECT 9043 / HFP020203 / CcI3) protein is Glucose-1-phosphate adenylyltransferase.